Consider the following 523-residue polypeptide: Acetyl-CoA hydrolase (523 aa).

Residue 277 to 281 (GIGNI) coordinates CoA. Glu-302 (5-glutamyl coenzyme A thioester intermediate) is an active-site residue. The CoA site is built by Asn-392 and Gly-396.

It belongs to the acetyl-CoA hydrolase/transferase family.

It is found in the cytoplasm. It catalyses the reaction acetyl-CoA + H2O = acetate + CoA + H(+). Its function is as follows. Presumably involved in regulating the intracellular acetyl-CoA pool for fatty acid and cholesterol synthesis and fatty acid oxidation. This chain is Acetyl-CoA hydrolase (ACH1), found in Eremothecium gossypii (strain ATCC 10895 / CBS 109.51 / FGSC 9923 / NRRL Y-1056) (Yeast).